We begin with the raw amino-acid sequence, 237 residues long: Lectin alpha chain (237 aa).

Glu-8 and Asp-10 together coordinate Mn(2+). Positions 10, 12, 14, and 19 each coordinate Ca(2+). Tyr-12 is a binding site for a carbohydrate. The Mn(2+) site is built by Asp-19, His-24, and Ser-34. 99–100 (LY) contacts a carbohydrate. Asp-208 lines the Ca(2+) pocket. Residue Arg-228 participates in a carbohydrate binding.

The protein belongs to the leguminous lectin family. As to quaternary structure, homotetramer. In terms of processing, the beta and gamma chains are produced by partial proteolytic processing of the lectin alpha chain by an asparaginyl endopeptidase. Mixture of 60% alpha lectin and 40% of its beta and gamma proteolytic fragments.

D-mannose/D-glucose-binding lectin. Has anti-inflammatory activity in rats. Induces histamine release in mast cells from rat. Induces lymphocyte proliferation and IFNG production. Shows toxicity against the aquatic snail B.glabrata at concentrations higher than 50 ug/ml. This chain is Lectin alpha chain, found in Dioclea grandiflora (Mucana).